Consider the following 151-residue polypeptide: Ribonuclease H (151 aa).

The region spanning 1 to 146 (MSDLFAYTDG…ADELARAGMA (146 aa)) is the RNase H type-1 domain. Asp9, Glu52, Asp74, and Asp138 together coordinate Mg(2+).

Belongs to the RNase H family. Monomer. It depends on Mg(2+) as a cofactor.

The protein resides in the cytoplasm. It carries out the reaction Endonucleolytic cleavage to 5'-phosphomonoester.. Endonuclease that specifically degrades the RNA of RNA-DNA hybrids. This Cereibacter sphaeroides (strain ATCC 17025 / ATH 2.4.3) (Rhodobacter sphaeroides) protein is Ribonuclease H.